The sequence spans 444 residues: Protein kinase C and casein kinase substrate in neurons protein 1 (444 aa).

S2 and S79 each carry phosphoserine. The F-BAR domain maps to 13-283 (EETTDSFWEV…AIRGADAQED (271 aa)). Residues 26–275 (KRTVKRIDDG…HVYRELEQAI (250 aa)) adopt a coiled-coil conformation. 2 disordered regions span residues 175–194 (MNSK…LQDK) and 309–386 (LPHT…DDSK). The residue at position 184 (T184) is a Phosphothreonine. Over residues 314–324 (TKKEKQPKKAE) the composition is skewed to basic and acidic residues. A compositionally biased stretch (polar residues) spans 329-351 (TNATGAVESTSQAGDRGSVSSYD). Phosphoserine is present on residues S346, S348, S349, S361, and S365. One can recognise an SH3 domain in the interval 385–444 (SKGVRVRALYDYDGQEQDELSFKAGDELTKLGEEDEQGWCRGRLDSGQLGLYPANYVEAI). Y394 is modified (phosphotyrosine). S405 and S430 each carry phosphoserine.

It belongs to the PACSIN family. May form heterooligomers with other PACSINs. Interacts with MAPT. Interacts with TRPV4. Interacts (via SH3 domain) with SYNJ1 and WASL. Interacts with DNM2 and DNM3. Interacts with both COBL and DBNL. Identified in a complex composed of COBL, PACSIN1 and WASL. Interacts with EHD1 and EHD3. Homodimer. Interacts (via SH3 domain) with DNM1; the interaction is reduced by DNM1 phosphorylation. Phosphorylated by casein kinase 2 (CK2) and protein kinase C (PKC). As to expression, highly expressed in brain and, at much lower levels, in heart and pancreas.

Its subcellular location is the cytoplasm. The protein resides in the cell projection. The protein localises to the synapse. It is found in the synaptosome. It localises to the ruffle membrane. Its subcellular location is the membrane. The protein resides in the cytoplasmic vesicle membrane. The protein localises to the cytosol. It is found in the cell membrane. Functionally, plays a role in the reorganization of the microtubule cytoskeleton via its interaction with MAPT; this decreases microtubule stability and inhibits MAPT-induced microtubule polymerization. Plays a role in cellular transport processes by recruiting DNM1, DNM2 and DNM3 to membranes. Plays a role in the reorganization of the actin cytoskeleton and in neuron morphogenesis via its interaction with COBL and WASL, and by recruiting COBL to the cell cortex. Plays a role in the regulation of neurite formation, neurite branching and the regulation of neurite length. Required for normal synaptic vesicle endocytosis; this process retrieves previously released neurotransmitters to accommodate multiple cycles of neurotransmission. Required for normal excitatory and inhibitory synaptic transmission. Binds to membranes via its F-BAR domain and mediates membrane tubulation. This is Protein kinase C and casein kinase substrate in neurons protein 1 (PACSIN1) from Homo sapiens (Human).